A 197-amino-acid polypeptide reads, in one-letter code: Nucleoid occlusion factor SlmA (197 aa).

An HTH tetR-type domain is found at 7 to 67 (INRREHILQC…GLIEFIEESL (61 aa)). The H-T-H motif DNA-binding region spans 30–49 (TTAKLASEVGVSEAALYRHF).

It belongs to the nucleoid occlusion factor SlmA family. As to quaternary structure, homodimer. Interacts with FtsZ.

The protein resides in the cytoplasm. It localises to the nucleoid. Its function is as follows. Required for nucleoid occlusion (NO) phenomenon, which prevents Z-ring formation and cell division over the nucleoid. Acts as a DNA-associated cell division inhibitor that binds simultaneously chromosomal DNA and FtsZ, and disrupts the assembly of FtsZ polymers. SlmA-DNA-binding sequences (SBS) are dispersed on non-Ter regions of the chromosome, preventing FtsZ polymerization at these regions. This Shewanella oneidensis (strain ATCC 700550 / JCM 31522 / CIP 106686 / LMG 19005 / NCIMB 14063 / MR-1) protein is Nucleoid occlusion factor SlmA.